Reading from the N-terminus, the 394-residue chain is NADH-quinone oxidoreductase subunit D 2 (394 aa).

This sequence belongs to the complex I 49 kDa subunit family. In terms of assembly, NDH-1 is composed of 14 different subunits. Subunits NuoB, C, D, E, F, and G constitute the peripheral sector of the complex.

It localises to the cell membrane. It catalyses the reaction a quinone + NADH + 5 H(+)(in) = a quinol + NAD(+) + 4 H(+)(out). In terms of biological role, NDH-1 shuttles electrons from NADH, via FMN and iron-sulfur (Fe-S) centers, to quinones in the respiratory chain. The immediate electron acceptor for the enzyme in this species is believed to be a menaquinone. Couples the redox reaction to proton translocation (for every two electrons transferred, four hydrogen ions are translocated across the cytoplasmic membrane), and thus conserves the redox energy in a proton gradient. The chain is NADH-quinone oxidoreductase subunit D 2 from Streptomyces griseus subsp. griseus (strain JCM 4626 / CBS 651.72 / NBRC 13350 / KCC S-0626 / ISP 5235).